A 204-amino-acid chain; its full sequence is UPF0637 protein SAS1041 (204 aa).

This sequence belongs to the UPF0637 family.

This chain is UPF0637 protein SAS1041, found in Staphylococcus aureus (strain MSSA476).